The following is a 238-amino-acid chain: Response regulator receiver protein Anae109_2439 (238 aa).

Response regulatory domains are found at residues 3 to 117 (RYLI…AAAR) and 121 to 228 (LVAV…ERLH). 2 positions are modified to 4-aspartylphosphate: Asp-52 and Asp-169.

Is diphosphorylated by GchK.

In terms of biological role, member of the two-component regulatory system GcHK/Anae109_2439. Is involved in a signal transduction system responding to oxygen availability. The protein is Response regulator receiver protein Anae109_2439 of Anaeromyxobacter sp. (strain Fw109-5).